Reading from the N-terminus, the 573-residue chain is MSKGAAIIAYANPIFHIRHLKLESFLWNIIIRAIVHNVSSPQRHSPISVYLRMRNHRVSPDFHTFPFLLPSFHNPLHLPLGQRTHAQILLFGLDKDPFVRTSLLNMYSSCGDLRSAQRVFDDSGSKDLPAWNSVVNAYAKAGLIDDARKLFDEMPERNVISWSCLINGYVMCGKYKEALDLFREMQLPKPNEAFVRPNEFTMSTVLSACGRLGALEQGKWVHAYIDKYHVEIDIVLGTALIDMYAKCGSLERAKRVFNALGSKKDVKAYSAMICCLAMYGLTDECFQLFSEMTTSDNINPNSVTFVGILGACVHRGLINEGKSYFKMMIEEFGITPSIQHYGCMVDLYGRSGLIKEAESFIASMPMEPDVLIWGSLLSGSRMLGDIKTCEGALKRLIELDPMNSGAYVLLSNVYAKTGRWMEVKCIRHEMEVKGINKVPGCSYVEVEGVVHEFVVGDESQQESERIYAMLDEIMQRLREAGYVTDTKEVLLDLNEKDKEIALSYHSEKLAIAFCLMKTRPGTPVRIIKNLRICGDCHLVMKMISKLFSREIVVRDCNRFHHFRDGSCSCRDFW.

PPR repeat units follow at residues glutamate 23 to proline 60, aspartate 61 to lysine 95, aspartate 96 to lysine 126, aspartate 127 to serine 161, tryptophan 162 to proline 188, asparagine 198 to isoleucine 232, aspartate 233 to lysine 263, aspartate 265 to serine 295, asparagine 301 to proline 336, and serine 337 to glutamate 367. Residues isoleucine 372–glutamate 447 are type E motif; degenerate. The tract at residues glycine 448–arginine 478 is type E(+) motif. Positions glutamate 479–tryptophan 573 are type DYW motif.

It belongs to the PPR family. PCMP-H subfamily.

The sequence is that of Pentatricopeptide repeat-containing protein At3g62890 (PCMP-H82) from Arabidopsis thaliana (Mouse-ear cress).